Consider the following 419-residue polypeptide: E3 ubiquitin-protein ligase RNF130 (419 aa).

The N-terminal stretch at M1–A27 is a signal peptide. Residues D28–S194 are Extracellular-facing. N-linked (GlcNAc...) asparagine glycosylation is found at N29, N40, N112, N135, N172, and N189. Positions I105 to Q176 constitute a PA domain. Residues L195–F217 form a helical membrane-spanning segment. Over I218–F419 the chain is Cytoplasmic. Residues C264–K305 form an RING-type zinc finger. S341 carries the phosphoserine modification.

In terms of tissue distribution, in testis sections, expressed in interstitial tissue and seminiferous tubules. In tubules, expression is mainly in postmeiotic germ cells and to a much lesser extent in Sertoli cells (at protein level). Expressed at high levels in liver, lung, stomach, heart and thymus.

The protein localises to the membrane. It is found in the cytoplasm. The enzyme catalyses S-ubiquitinyl-[E2 ubiquitin-conjugating enzyme]-L-cysteine + [acceptor protein]-L-lysine = [E2 ubiquitin-conjugating enzyme]-L-cysteine + N(6)-ubiquitinyl-[acceptor protein]-L-lysine.. Its pathway is protein modification; protein ubiquitination. Its function is as follows. Acts as an E3 ubiquitin-protein ligase. May have a role during the programmed cell death of hematopoietic cells. The polypeptide is E3 ubiquitin-protein ligase RNF130 (Rattus norvegicus (Rat)).